The chain runs to 334 residues: Formamidase (334 aa).

Residues 14 to 260 (MLMGLVQYPV…WEIVTAEVFP (247 aa)) enclose the CN hydrolase domain. Residue E60 is the Proton acceptor of the active site. K133 acts as the Proton donor in catalysis. C166 (nucleophile) is an active-site residue.

Belongs to the carbon-nitrogen hydrolase superfamily. Aliphatic amidase family.

It carries out the reaction formamide + H2O = formate + NH4(+). Its function is as follows. Is an aliphatic amidase with a restricted substrate specificity, as it only hydrolyzes formamide. In Nitratidesulfovibrio vulgaris (strain DP4) (Desulfovibrio vulgaris), this protein is Formamidase.